Consider the following 108-residue polypeptide: Synaptobrevin-1 (108 aa).

The tract at residues 1–25 (MDAQGDAGAQGGSQGPRPSNKRLQQ) is disordered. The Cytoplasmic portion of the chain corresponds to 1–85 (MDAQGDAGAQ…KRKYWWKNIK (85 aa)). In terms of domain architecture, v-SNARE coiled-coil homology spans 22–82 (RLQQTQAQVD…ATLKRKYWWK (61 aa)). A helical; Anchor for type IV membrane protein membrane pass occupies residues 86-106 (MMIIMCAIVVILIIIIVLWAG). Topologically, residues 107-108 (GK) are extracellular.

This sequence belongs to the synaptobrevin family. Part of the SNARE core complex containing CBG09569/SNAP25, snb-1/VAMP2 and CBG03570/STX1A. This complex binds to cpx-1/CPLX1.

It localises to the cytoplasmic vesicle. The protein resides in the secretory vesicle. Its subcellular location is the synaptic vesicle membrane. The protein localises to the cell membrane. It is found in the synapse. It localises to the synaptosome. In terms of biological role, involved in the targeting and/or fusion of transport vesicles to their target membrane. Acts in neuronal exocytosis of synaptic transmission. Likely to have a role in cholinergic transmisson. Required for viability, coordinated movement and M3 pharynx motor neuron function. In Caenorhabditis briggsae, this protein is Synaptobrevin-1.